A 218-amino-acid chain; its full sequence is Adenylate kinase (218 aa).

Residue 10–15 (GAGKGT) coordinates ATP. Residues 30–59 (STGDMIRETIKSGSALGQELKKVLDAGELV) form an NMP region. AMP-binding positions include Thr31, Arg36, 57–59 (ELV), and Gln92. Positions 122-159 (GRRIHPASGRTYHTKFNPPKVADKDDVTGEPLITRTDD) are LID. ATP contacts are provided by residues Arg123 and 132–133 (TY). Positions 156 and 167 each coordinate AMP. Position 202 (Gln202) interacts with ATP.

It belongs to the adenylate kinase family. As to quaternary structure, monomer.

The protein localises to the cytoplasm. The enzyme catalyses AMP + ATP = 2 ADP. It functions in the pathway purine metabolism; AMP biosynthesis via salvage pathway; AMP from ADP: step 1/1. In terms of biological role, catalyzes the reversible transfer of the terminal phosphate group between ATP and AMP. Plays an important role in cellular energy homeostasis and in adenine nucleotide metabolism. The polypeptide is Adenylate kinase (Francisella tularensis subsp. tularensis (strain FSC 198)).